Reading from the N-terminus, the 388-residue chain is Spermidine/putrescine import ATP-binding protein PotA (388 aa).

Residues 17–247 form the ABC transporter domain; that stretch reads IEIDHVTKRF…PATVFVANFI (231 aa). 49-56 contributes to the ATP binding site; sequence GPSGCGKT.

The protein belongs to the ABC transporter superfamily. Spermidine/putrescine importer (TC 3.A.1.11.1) family. The complex is composed of two ATP-binding proteins (PotA), two transmembrane proteins (PotB and PotC) and a solute-binding protein (PotD).

It is found in the cell membrane. The catalysed reaction is ATP + H2O + polyamine-[polyamine-binding protein]Side 1 = ADP + phosphate + polyamineSide 2 + [polyamine-binding protein]Side 1.. In terms of biological role, part of the ABC transporter complex PotABCD involved in spermidine/putrescine import. Responsible for energy coupling to the transport system. In Mycobacterium sp. (strain KMS), this protein is Spermidine/putrescine import ATP-binding protein PotA.